We begin with the raw amino-acid sequence, 951 residues long: MEKTYNPTSIEQDLYKTWEEQGYFKPHGDTSKESYSIMIPPPNVTGSLHMGHAFQDTIMDTLIRCERMKGKNTLWQVGTDHAGIATQMVVERKIAAEEGKTKHDYGREAFIDKIWEWKGESGGTITKQLRRLGASVDWDRERFTMDDGLSNAVQEVFVRLYEDDLIYRGKRLVNWDPKLHTAISDLEVENKDTKGHMWHFRYPLADGVKTADGKDYIVVATTRPETMLGDTGVAVNPEDPRYQDLIGKDIILPIVDRRIPIVGDEHADMEKGTGCVKITPAHDFNDYEVGKRHQLPMINILTFDANIRDAAEVFTTNGEPSDAYGTELPAKYHGMERFAARKAIVAEFDELGLLEEVKDHDLQVPYGDRGGVVIEPMLTDQWYVRTAPLAKTAVEAVENGDIQFVPKQYENMYFSWMRDVQDWCISRQLWWGHRIPAWYDNQGNVYVGRSEEEVRQNHNLESVIELHQDEDVLDTWFSSALWTFGTQGWPEQTDDLKVFHPSDVLVTGFDIIFFWVARMIMMTMHFVKDENGKPQVPFKTVYVTGLIRDENGDKMSKSKGNVLDPIDMIDGIDLESLVEKRTGNMMQPQLAAKIEKNTRKTFENGIEAYGTDALRFTLAAMASTGRDINWDMKRLEGYRNFCNKLWNASRYVMMNTEEQDCGFGAGEIEYSLADKWIESQFELAAKAFNNHIDNYRLDMAANTLYEFIWNQFCDWYLELTKPVLWKGTEAQQRGTRRTLITVLEKTLRLAHPVIPYITETIWQSIKPLVDGVEGETIMLQSLPQYDEANFNQEALDDIEWVKAFITSIRNLRAEYDINPGKPLEVMLKADEKDAARLEANKQVLMSLAKLESVRVLAAGEETPACATALVAKSELMIPMAGLIDKDAELARLDKEVAKTQGEIKRIEGKLGNEGFVAKAPEAVIAKEREKLEGYQETLAKLEEQKATIAAL.

The 'HIGH' region motif lies at 42–52 (PNVTGSLHMGH). The 'KMSKS' region signature appears at 554–558 (KMSKS). ATP is bound at residue Lys557. Positions 882-951 (LIDKDAELAR…EEQKATIAAL (70 aa)) form a coiled coil.

Belongs to the class-I aminoacyl-tRNA synthetase family. ValS type 1 subfamily. In terms of assembly, monomer.

The protein localises to the cytoplasm. The catalysed reaction is tRNA(Val) + L-valine + ATP = L-valyl-tRNA(Val) + AMP + diphosphate. In terms of biological role, catalyzes the attachment of valine to tRNA(Val). As ValRS can inadvertently accommodate and process structurally similar amino acids such as threonine, to avoid such errors, it has a 'posttransfer' editing activity that hydrolyzes mischarged Thr-tRNA(Val) in a tRNA-dependent manner. The sequence is that of Valine--tRNA ligase from Vibrio vulnificus (strain CMCP6).